Consider the following 190-residue polypeptide: Adenine phosphoribosyltransferase (190 aa).

It belongs to the purine/pyrimidine phosphoribosyltransferase family. In terms of assembly, homodimer.

The protein resides in the cytoplasm. It carries out the reaction AMP + diphosphate = 5-phospho-alpha-D-ribose 1-diphosphate + adenine. It participates in purine metabolism; AMP biosynthesis via salvage pathway; AMP from adenine: step 1/1. Its function is as follows. Catalyzes a salvage reaction resulting in the formation of AMP, that is energically less costly than de novo synthesis. In Cupriavidus necator (strain ATCC 17699 / DSM 428 / KCTC 22496 / NCIMB 10442 / H16 / Stanier 337) (Ralstonia eutropha), this protein is Adenine phosphoribosyltransferase.